Consider the following 300-residue polypeptide: Arginine/serine-rich protein 1 (300 aa).

Residues 1 to 142 form a disordered region; that stretch reads MSSAAVSKYV…RGRSHHRRSY (142 aa). Serine 17 carries the post-translational modification Phosphoserine. The segment covering 23–36 has biased composition (low complexity); it reads SPSTSGSGRSSRLS. The span at 37–104 shows a compositional bias: basic residues; the sequence is SRSRSRSSSR…RSRSRSRGHR (68 aa). Residues 105–115 are compositionally biased toward basic and acidic residues; that stretch reads YYRDSRYEQPR. The segment covering 116 to 125 has biased composition (low complexity); sequence RYYQSPSPYR. Residues serine 120 and serine 122 each carry the phosphoserine modification. Positions 126 to 141 are enriched in basic residues; the sequence is SRSRSRSRGRSHHRRS. Arginine 147 carries the omega-N-methylarginine modification. The tract at residues 222–300 is disordered; the sequence is QGAVSCSGPK…KSPYGLWIPV (79 aa). A compositionally biased stretch (basic and acidic residues) spans 268 to 277; that stretch reads PLEKTTKAAV. At serine 284 the chain carries Phosphoserine.

It belongs to the RSRP family. Phosphorylated. Phosphorylation at Ser-120 and Ser-122 mediates the interaction with spliceosome proteins.

Its subcellular location is the nucleus. In terms of biological role, probably acts as a spliceosomal factor that contributes to spliceosome assembly and regulates the isoform switching of proteins such as PARP6. The sequence is that of Arginine/serine-rich protein 1 (Rsrp1) from Rattus norvegicus (Rat).